The following is a 424-amino-acid chain: E3 ubiquitin-protein ligase RNF26 (424 aa).

Transmembrane regions (helical) follow at residues 24–44 (LNFL…AFIY), 60–80 (GFLL…FGGL), 157–177 (ISTQ…TGPL), 183–203 (VVAA…ILLW), and 224–244 (VVFH…ILIV). An RING-type zinc finger spans residues 371 to 413 (CVICQDQSKTVLLLPCRHLCLCQACTEILMRHPVYHRNCPLCR).

As to quaternary structure, interacts with INCA1. Interacts with TMEM43, ENDOD1, TMEM33 and TMED1 to form a complex capable of modulating innate immune signaling through the cGAS-STING pathway. Interacts with UBE2J1; this interaction is important for SQSTM1 ubiquitination.

The protein resides in the endoplasmic reticulum membrane. It carries out the reaction S-ubiquitinyl-[E2 ubiquitin-conjugating enzyme]-L-cysteine + [acceptor protein]-L-lysine = [E2 ubiquitin-conjugating enzyme]-L-cysteine + N(6)-ubiquitinyl-[acceptor protein]-L-lysine.. Its pathway is protein modification; protein ubiquitination. E3 ubiquitin-protein ligase that plays a key role in endosome organization by retaining vesicles in the perinuclear cloud. Acts as a platform for perinuclear positioning of the endosomal system by mediating ubiquitination of SQSTM1 through interaction with the ubiquitin conjugating enzyme UBE2J1. Ubiquitinated SQSTM1 attracts specific vesicle-associated adapters, forming a molecular bridge that restrains cognate vesicles in the perinuclear region and organizes the endosomal pathway for efficient cargo transport. Also acts as a regulator of type I interferon production in response to viral infection by mediating the formation of 'Lys-11'-linked polyubiquitin chains on TMEM173/STING, leading to stabilize TMEM173/STING. Also required to limit type I interferon response by promoting autophagic degradation of IRF3. This Mus musculus (Mouse) protein is E3 ubiquitin-protein ligase RNF26.